The following is a 537-amino-acid chain: Extracellular exo-inulinase inuE (537 aa).

A signal peptide spans 1–19; the sequence is MARLLKAVTVCALAGIAHA. Residue D41 is part of the active site. 8 N-linked (GlcNAc...) asparagine glycosylation sites follow: N49, N67, N112, N300, N363, N398, N430, and N531.

Belongs to the glycosyl hydrolase 32 family.

The protein localises to the secreted. The catalysed reaction is Hydrolysis of terminal, non-reducing (2-&gt;1)- and (2-&gt;6)-linked beta-D-fructofuranose residues in fructans.. With respect to regulation, the catalytic activity is increased by manganese cathions, but strongly inhibited by other metal ions such as copper, aluminum, silver, iron, nickel, zinc and magnesium cathions. Its function is as follows. Exo-inulinase involved in utilization of the plant storage polymer inulin, consisting of fructooligosaccharides with a degree of polymerization (DP) value from 2 to 60. Splits off terminal fructose units successively from the non-reducing end of the inulin molecule, and also hydrolyze sucrose and raffinose. This chain is Extracellular exo-inulinase inuE (exoI), found in Aspergillus ficuum.